We begin with the raw amino-acid sequence, 290 residues long: Fructose-1,6-bisphosphatase class 1 (290 aa).

Mg(2+)-binding residues include E78, D96, L98, and D99. Residues 99-102 (DGSS), Y201, and K226 each bind substrate. Position 232 (E232) interacts with Mg(2+).

The protein belongs to the FBPase class 1 family. Homotetramer. Mg(2+) is required as a cofactor.

The protein resides in the cytoplasm. It catalyses the reaction beta-D-fructose 1,6-bisphosphate + H2O = beta-D-fructose 6-phosphate + phosphate. The protein operates within carbohydrate biosynthesis; gluconeogenesis. The protein is Fructose-1,6-bisphosphatase class 1 of Helicobacter pylori (strain G27).